The chain runs to 1557 residues: DVA-1 polyprotein (1557 aa).

The first 21 residues, M1–S21, serve as a signal peptide directing secretion. The propeptide occupies S22–R60. An N-linked (GlcNAc...) asparagine glycan is attached at N997.

Belongs to the NPA family. Post-translationally, nematode polyprotein allergens (NPAs) are synthesized as large polypeptides that are subsequently proteolytically cleaved to active polypeptide units.

In terms of biological role, has high binding affinity for fatty acids and retinoids. The sequence is that of DVA-1 polyprotein (DVA-1) from Dictyocaulus viviparus (Bovine lungworm).